Consider the following 350-residue polypeptide: Dauer larva development regulatory growth factor daf-7 (350 aa).

The first 21 residues, 1–21 (MFMASSLPVFIFLLSLPHGLT), serve as a signal peptide directing secretion. Positions 22–234 (FNCTNSGVCI…TRPKGSRKRR (213 aa)) are excised as a propeptide. Asn-23 carries N-linked (GlcNAc...) asparagine glycosylation. Disulfide bonds link Cys-241-Cys-251, Cys-250-Cys-315, Cys-278-Cys-347, and Cys-282-Cys-349.

This sequence belongs to the TGF-beta family. Expressed in the chemosensory neurons, including in the ASJ neurons in males. Expressed in the ASI neurons.

The protein resides in the secreted. Functionally, under harsh environmental conditions, larvae enter a developmentally arrested state known as dauer; TGF-beta-like daf-7 acts to inhibit dauer larva formation and promote growth. May be a ligand to cell surface receptor daf-4. May act as a negative regulator of dauer larva development by transducing chemosensory information from ASI neurons. Involved in sensitivity to CO2 levels. Involved in mate searching behavior of males, acting in concert with the neuropeptide pdf-1. In AWC neurons, acts to promote expression of srsx-3, a member of the GPCR family. The polypeptide is Dauer larva development regulatory growth factor daf-7 (Caenorhabditis elegans).